The primary structure comprises 813 residues: Protein SBE22 (813 aa).

3 disordered regions span residues 1–66 (MIRP…HGHA), 107–240 (EIFS…GEFG), and 331–359 (QKDS…NRES). Residues 56 to 66 (RPSDNLFHGHA) show a composition bias toward basic and acidic residues. The span at 107 to 121 (EIFSTSSSDTQSNIS) shows a compositional bias: low complexity. Positions 127–138 (SEDHSFGMDKSV) are enriched in basic and acidic residues. Polar residues-rich tracts occupy residues 139–160 (DNSS…NGDS), 169–200 (VSVN…NRSM), and 214–234 (KNSS…NRSV).

This sequence belongs to the SBE2 family.

It localises to the cytoplasm. Its subcellular location is the golgi apparatus. Its function is as follows. With SBE2, is involved in cell wall integrity and polarity processes like bud growth. The chain is Protein SBE22 (SBE22) from Candida glabrata (strain ATCC 2001 / BCRC 20586 / JCM 3761 / NBRC 0622 / NRRL Y-65 / CBS 138) (Yeast).